Reading from the N-terminus, the 190-residue chain is Potassium-transporting ATPase KdpC subunit (190 aa).

A helical membrane pass occupies residues 10–30 (TFIFLLLITGGVYPLLTTVLG).

Belongs to the KdpC family. As to quaternary structure, the system is composed of three essential subunits: KdpA, KdpB and KdpC.

Its subcellular location is the cell inner membrane. Functionally, part of the high-affinity ATP-driven potassium transport (or Kdp) system, which catalyzes the hydrolysis of ATP coupled with the electrogenic transport of potassium into the cytoplasm. This subunit acts as a catalytic chaperone that increases the ATP-binding affinity of the ATP-hydrolyzing subunit KdpB by the formation of a transient KdpB/KdpC/ATP ternary complex. This is Potassium-transporting ATPase KdpC subunit from Escherichia coli (strain K12 / MC4100 / BW2952).